Consider the following 594-residue polypeptide: UvrABC system protein C (594 aa).

One can recognise a GIY-YIG domain in the interval 14 to 91; it reads DQPGCYLMKD…IKKHDPKYNI (78 aa). The 36-residue stretch at 196-231 folds into the UVR domain; that stretch reads KEVRSELETKMYEASEKLEFERAKELRDQIAHIDAI.

It belongs to the UvrC family. As to quaternary structure, interacts with UvrB in an incision complex.

The protein resides in the cytoplasm. Functionally, the UvrABC repair system catalyzes the recognition and processing of DNA lesions. UvrC both incises the 5' and 3' sides of the lesion. The N-terminal half is responsible for the 3' incision and the C-terminal half is responsible for the 5' incision. The sequence is that of UvrABC system protein C from Bacillus cereus (strain Q1).